The following is a 202-amino-acid chain: Snake venom metalloproteinase fibrolase (202 aa).

Residues 6-202 (RYIELVIVAD…HNPQCILNQP (197 aa)) form the Peptidase M12B domain. A Ca(2+)-binding site is contributed by E9. N-linked (GlcNAc...) asparagine glycosylation occurs at N25. Position 93 (D93) interacts with Ca(2+). 3 disulfide bridges follow: C117–C197, C157–C181, and C159–C164. H142 provides a ligand contact to Zn(2+). E143 is a catalytic residue. Positions 146 and 152 each coordinate Zn(2+). The Ca(2+) site is built by C197 and N200.

Belongs to the venom metalloproteinase (M12B) family. P-I subfamily. Monomer. The cofactor is Zn(2+). In terms of processing, glycosylated. As to expression, expressed by the venom gland.

Its subcellular location is the secreted. The catalysed reaction is Hydrolysis of 14-Ala-|-Leu-15 in insulin B chain and 413-Lys-|-Leu-414 in alpha-chain of fibrinogen.. Its activity is regulated as follows. Activated by calcium and magnesium ions. Inhibited by EDTA, DTT and L-cysteine. Activity is not affected by PMSF or heparin. In terms of biological role, has fibrino(geno)lytic activity on the alpha and beta chains of fibrinogen (FGA and FGB). Inhibits human ADP- and collagen-induced platelet aggregation on platelet-rich plasma but does not affect the thrombin-induced aggregation of rabbit washed platelets. Slightly degrades plasminogen. This is Snake venom metalloproteinase fibrolase from Macrovipera lebetinus (Levantine viper).